Here is a 280-residue protein sequence, read N- to C-terminus: CAG pathogenicity island protein 12 (280 aa).

Residues 1–20 (MKLRASVLIGATILCLILSA) form the signal peptide. Cys-21 carries the N-palmitoyl cysteine lipid modification. A lipid anchor (S-diacylglycerol cysteine) is attached at Cys-21.

The protein resides in the cell membrane. The chain is CAG pathogenicity island protein 12 (cagT) from Helicobacter pylori (strain ATCC 700392 / 26695) (Campylobacter pylori).